The sequence spans 358 residues: L-Ala-D/L-Glu epimerase (358 aa).

Residues R24, T135, and K160 each coordinate substrate. K162 serves as the catalytic Proton acceptor; specific for (R)-substrate epimerization. Mg(2+) is bound by residues D190, E218, and D243. K267 functions as the Proton acceptor; specific for (S)-substrate epimerization in the catalytic mechanism. Substrate is bound by residues C295, D320, and D322.

The protein belongs to the mandelate racemase/muconate lactonizing enzyme family. It depends on Mg(2+) as a cofactor.

The catalysed reaction is L-alanyl-L-glutamate = L-alanyl-D-glutamate. It functions in the pathway cell wall degradation; peptidoglycan degradation. Its function is as follows. Catalyzes the epimerization of L-Ala-D-Glu to L-Ala-L-Glu and has probably a role in the metabolism of the murein peptide, of which L-Ala-D-Glu is a component. Is also able to catalyze the epimerization of L-Ala-D-Asp. This Clostridium acetobutylicum (strain ATCC 824 / DSM 792 / JCM 1419 / IAM 19013 / LMG 5710 / NBRC 13948 / NRRL B-527 / VKM B-1787 / 2291 / W) protein is L-Ala-D/L-Glu epimerase.